We begin with the raw amino-acid sequence, 269 residues long: tRNA pseudouridine synthase A (269 aa).

Asp-51 serves as the catalytic Nucleophile. Substrate is bound at residue Tyr-109.

The protein belongs to the tRNA pseudouridine synthase TruA family. In terms of assembly, homodimer.

The enzyme catalyses uridine(38/39/40) in tRNA = pseudouridine(38/39/40) in tRNA. In terms of biological role, formation of pseudouridine at positions 38, 39 and 40 in the anticodon stem and loop of transfer RNAs. The sequence is that of tRNA pseudouridine synthase A from Aeromonas salmonicida (strain A449).